The following is a 294-amino-acid chain: tRNA pseudouridine synthase B (294 aa).

D39 serves as the catalytic Nucleophile.

It belongs to the pseudouridine synthase TruB family. Type 1 subfamily.

The catalysed reaction is uridine(55) in tRNA = pseudouridine(55) in tRNA. In terms of biological role, responsible for synthesis of pseudouridine from uracil-55 in the psi GC loop of transfer RNAs. In Streptococcus pyogenes serotype M3 (strain ATCC BAA-595 / MGAS315), this protein is tRNA pseudouridine synthase B.